The sequence spans 89 residues: Elongation factor 1-beta (89 aa).

The protein belongs to the EF-1-beta/EF-1-delta family.

In terms of biological role, promotes the exchange of GDP for GTP in EF-1-alpha/GDP, thus allowing the regeneration of EF-1-alpha/GTP that could then be used to form the ternary complex EF-1-alpha/GTP/AAtRNA. The polypeptide is Elongation factor 1-beta (Methanococcus maripaludis (strain DSM 14266 / JCM 13030 / NBRC 101832 / S2 / LL)).